Consider the following 205-residue polypeptide: GTP cyclohydrolase-2 (205 aa).

49–53 (RLHSE) is a binding site for GTP. The Zn(2+) site is built by Cys-54, Cys-65, and Cys-67. Residues Gln-70, 92 to 94 (EGR), and Thr-114 contribute to the GTP site. Asp-126 (proton acceptor) is an active-site residue. Catalysis depends on Arg-128, which acts as the Nucleophile. 2 residues coordinate GTP: Thr-149 and Lys-154.

It belongs to the GTP cyclohydrolase II family. The cofactor is Zn(2+).

It catalyses the reaction GTP + 4 H2O = 2,5-diamino-6-hydroxy-4-(5-phosphoribosylamino)-pyrimidine + formate + 2 phosphate + 3 H(+). The protein operates within cofactor biosynthesis; riboflavin biosynthesis; 5-amino-6-(D-ribitylamino)uracil from GTP: step 1/4. Catalyzes the conversion of GTP to 2,5-diamino-6-ribosylamino-4(3H)-pyrimidinone 5'-phosphate (DARP), formate and pyrophosphate. The sequence is that of GTP cyclohydrolase-2 from Pseudomonas aeruginosa (strain UCBPP-PA14).